Consider the following 403-residue polypeptide: F-box protein At2g40925 (403 aa).

The region spanning 21 to 71 is the F-box domain; that stretch reads NRHDCEIPPDLMIEILIRLPTKSFMRFKCVSKQWSPLISGRYFCNRLFTCV.

This is F-box protein At2g40925 from Arabidopsis thaliana (Mouse-ear cress).